A 347-amino-acid polypeptide reads, in one-letter code: tRNA N6-adenosine threonylcarbamoyltransferase (347 aa).

Fe cation contacts are provided by H113 and H117. Substrate-binding positions include 136–140 (IVSGG), D170, G183, D187, and N282. D310 contacts Fe cation.

This sequence belongs to the KAE1 / TsaD family. Fe(2+) is required as a cofactor.

The protein resides in the cytoplasm. The enzyme catalyses L-threonylcarbamoyladenylate + adenosine(37) in tRNA = N(6)-L-threonylcarbamoyladenosine(37) in tRNA + AMP + H(+). Its function is as follows. Required for the formation of a threonylcarbamoyl group on adenosine at position 37 (t(6)A37) in tRNAs that read codons beginning with adenine. Is involved in the transfer of the threonylcarbamoyl moiety of threonylcarbamoyl-AMP (TC-AMP) to the N6 group of A37, together with TsaE and TsaB. TsaD likely plays a direct catalytic role in this reaction. The chain is tRNA N6-adenosine threonylcarbamoyltransferase from Bifidobacterium longum (strain NCC 2705).